A 193-amino-acid chain; its full sequence is Protein Syd (193 aa).

It belongs to the Syd family.

It localises to the cell inner membrane. Functionally, interacts with the SecY protein in vivo. May bind preferentially to an uncomplexed state of SecY, thus functioning either as a chelating agent for excess SecY in the cell or as a regulatory factor that negatively controls the translocase function. This is Protein Syd from Tolumonas auensis (strain DSM 9187 / NBRC 110442 / TA 4).